The chain runs to 316 residues: uncharacterized protein (316 aa).

Residues 1–70 (SFAYSGNSES…NNDEIGIWNY (70 aa)) lie on the Cytoplasmic side of the membrane. A helical membrane pass occupies residues 71-91 (ISVAEMGGVLLFLSYWIWTCL). His-92 is a topological domain (lumenal). A helical membrane pass occupies residues 93-113 (FSKIIFPAQKVICLYIFLFAL). The Cytoplasmic segment spans residues 114–170 (NQTLQECIEEYVFSSECIKYRQFYSVYEIIDFLRTNFYRLFVIYCALGFGITRTVPK). A helical membrane pass occupies residues 171-191 (YLMIKGISIVIALCSVYWISL). At 192–194 (YKD) the chain is on the lumenal side. A helical transmembrane segment spans residues 195–215 (VYVVSEIFDMIQYEVSPAIWV). Topologically, residues 216–245 (YSICHLLKQCTSVTTYENASKARFFRRMLN) are cytoplasmic. Residues 246–266 (AFIFIFCASPMLHYLSNIIFG) traverse the membrane as a helical segment. Over 267 to 316 (NFDYRLSVIIGDLFTFMEKIAFPCYIMFPTHNEALAYNRNVAEEAQEKMI) the chain is Lumenal.

It belongs to the UPF0742 family.

It is found in the endoplasmic reticulum. The protein localises to the membrane. This is an uncharacterized protein from Schizosaccharomyces pombe (strain 972 / ATCC 24843) (Fission yeast).